The chain runs to 926 residues: Progesterone receptor (926 aa).

The segment at 1-48 (MTELQAKDPQVLHTSGASPSPPHIGSPLLARLDSGPFQGSQHSDVSSV) is disordered. The interval 1 to 165 (MTELQAKDPQ…PATKGLLSPL (165 aa)) is AF3; mediates transcriptional activation (in isoform B). The interval 1 to 559 (MTELQAKDPQ…YGFDSLPQKI (559 aa)) is modulating, Pro-Rich. Lys7 is covalently cross-linked (Glycyl lysine isopeptide (Lys-Gly) (interchain with G-Cter in SUMO)). Ser20 bears the Phosphoserine mark. The LXXL motif 1 motif lies at 56 to 60 (LDGLL). Ser82 bears the Phosphoserine mark. The LXXL motif 1 signature appears at 116-120 (LDSLL). A phosphoserine mark is found at Ser131 and Ser163. The tract at residues 166–305 (MSRPEIKAGD…LATTVVDFIH (140 aa)) is mediates transcriptional transrepression (in isoform A). The interval 168 to 256 (RPEIKAGDSS…GTGSGGGVAA (89 aa)) is disordered. Positions 184–188 (KVLPK) match the Nuclear localization signal motif. 2 positions are modified to phosphoserine: Ser191 and Ser214. Phosphoserine; by MAPK1 is present on Ser294. Residues 327 to 364 (DSYDGGATAQGPFAPPRGSPSAPSPPVPCGDFPDCTYP) are disordered. Over residues 339–354 (FAPPRGSPSAPSPPVP) the composition is skewed to pro residues. Ser345 is subject to Phosphoserine; by MAPK. Lys388 is covalently cross-linked (Glycyl lysine isopeptide (Lys-Gly) (interchain with G-Cter in SUMO); alternate). Lys388 participates in a covalent cross-link: Glycyl lysine isopeptide (Lys-Gly) (interchain with G-Cter in ubiquitin); alternate. The interval 391–447 (EEGADAAVRSPRPYLSAGASSSTFPDFPLAPAPQRAPSSRPGEAAVAGGPSSAAVSP) is disordered. Position 400 is a phosphoserine; by CDK2 (Ser400). A compositionally biased stretch (low complexity) spans 422-447 (APQRAPSSRPGEAAVAGGPSSAAVSP). An AF1; mediates transcriptional activation region spans residues 453-539 (SALECILYKA…VYPPYLNYLR (87 aa)). Lys524 is covalently cross-linked (Glycyl lysine isopeptide (Lys-Gly) (interchain with G-Cter in SUMO)). Residues 557-632 (QKICLICGDE…AGMVLGGRKF (76 aa)) constitute a DNA-binding region (nuclear receptor). 2 consecutive NR C4-type zinc fingers follow at residues 560-580 (CLIC…CGSC) and 596-615 (CAGR…CPAC). Ser669 is modified (phosphoserine). The 235-residue stretch at 672–906 (QEIQLVPPLI…EFPEMMSEVI (235 aa)) folds into the NR LBD domain. The interval 673 to 926 (EIQLVPPLIN…MVKPLLFHKK (254 aa)) is AF2; mediates transcriptional activation. Position 759 (Arg759) interacts with progesterone.

It belongs to the nuclear hormone receptor family. NR3 subfamily. As to quaternary structure, interacts with SMARD1 and UNC45A. Interacts with CUEDC2; the interaction promotes ubiquitination, decreases sumoylation, and represses transcriptional activity. Interacts with PIAS3; the interaction promotes sumoylation of PR in a hormone-dependent manner, inhibits DNA-binding, and alters nuclear export. Interacts with SP1; the interaction requires ligand-induced phosphorylation on Ser-294 by ERK1/2 MAPK. Interacts with PRMT2. Isoform A interacts with NCOR2. Isoform B (but not isoform A) interacts with NCOA2 and NCOA1. Isoform B (but not isoform A) interacts with KLF9. In terms of processing, phosphorylated on multiple serine sites. Several of these sites are hormone-dependent. Phosphorylation on Ser-294 is highly hormone-dependent and modulates ubiquitination and sumoylation on Lys-388. Phosphorylation on Ser-345 also requires induction by hormone. Basal phosphorylation on Ser-82, Ser-163, Ser-191 and Ser-400 is increased in response to progesterone and can be phosphorylated in vitro by the CDK2-A1 complex. Increased levels of phosphorylation on Ser-400 also in the presence of EGF, heregulin, IGF, PMA and FBS. Phosphorylation at this site by CDK2 is ligand-independent, and increases nuclear translocation and transcriptional activity. Phosphorylation at Ser-163 and Ser-294, but not at Ser-191, is impaired during the G(2)/M phase of the cell cycle. Phosphorylation on Ser-345 by ERK1/2 MAPK is required for interaction with SP1. Post-translationally, sumoylation is hormone-dependent and represses transcriptional activity. Sumoylation on all three sites is enhanced by PIAS3. Desumoylated by SENP1. Sumoylation on Lys-388, the main site of sumoylation, is repressed by ubiquitination on the same site, and modulated by phosphorylation at Ser-294. Ubiquitination is hormone-dependent and represses sumoylation on the same site. Promoted by MAPK-mediated phosphorylation on Ser-294. Ubiquitinated by UBR5, leading to its degradation: UBR5 specifically recognizes and binds ligand-bound PGR when it is not associated with coactivators (NCOAs). In presence of NCOAs, the UBR5-degron is not accessible, preventing its ubiquitination and degradation. In terms of processing, palmitoylated by ZDHHC7 and ZDHHC21. Palmitoylation is required for plasma membrane targeting and for rapid intracellular signaling via ERK and AKT kinases and cAMP generation. In terms of tissue distribution, expression of isoform A and isoform B in mammary epithelial cells is temporally and spatially separated during normal mammary gland development. Isoform A and isoform B are expressed in the pituitary. Isoform A and isoform B are differentially expressed in the ovary and oviduct, and the level of expression is dependent on both the cell type and estrous cycle stage.

The protein resides in the nucleus. The protein localises to the cytoplasm. Its function is as follows. The steroid hormones and their receptors are involved in the regulation of eukaryotic gene expression and affect cellular proliferation and differentiation in target tissues. Depending on the isoform, progesterone receptor functions as a transcriptional activator or repressor. In terms of biological role, ligand-dependent transdominant repressor of steroid hormone receptor transcriptional activity including repression of its isoform B, MR and ER. Transrepressional activity may involve recruitment of corepressor NCOR2. Transcriptional activator of several progesteron-dependent promoters in a variety of cell types. Involved in activation of SRC-dependent MAPK signaling on hormone stimulation. The polypeptide is Progesterone receptor (Pgr) (Mus musculus (Mouse)).